The sequence spans 273 residues: Putative phosphoenolpyruvate synthase regulatory protein (273 aa).

An ADP-binding site is contributed by 153–160 (GVSRSGKT).

The protein belongs to the pyruvate, phosphate/water dikinase regulatory protein family. PSRP subfamily.

It carries out the reaction [pyruvate, water dikinase] + ADP = [pyruvate, water dikinase]-phosphate + AMP + H(+). The catalysed reaction is [pyruvate, water dikinase]-phosphate + phosphate + H(+) = [pyruvate, water dikinase] + diphosphate. Functionally, bifunctional serine/threonine kinase and phosphorylase involved in the regulation of the phosphoenolpyruvate synthase (PEPS) by catalyzing its phosphorylation/dephosphorylation. This is Putative phosphoenolpyruvate synthase regulatory protein from Delftia acidovorans (strain DSM 14801 / SPH-1).